A 500-amino-acid chain; its full sequence is ADP,ATP carrier protein 5 (500 aa).

The next 11 membrane-spanning stretches (helical) occupy residues 26 to 46, 62 to 82, 94 to 114, 149 to 169, 184 to 204, 224 to 244, 287 to 307, 328 to 348, 357 to 377, 381 to 401, and 469 to 489; these read LGKFIPISALMFCILFNQNIL, IAGFAKVYCVTPVAALFVIIY, IFYYLSAFFISCFILFAFVIY, YIVYYSLAELWPNIFYVLLFW, FYTLFSLFGNSSLILVGFLMM, ITLVQVSTTIVAIVAIICCLL, LWLLLICSAAFGFAINLVEAV, LYILWTGVAIIVMTIIGNNVM, AVISPVIIMVTGILFFVLIVF, ILSLFDGAILMSPLALAVSIG, and SISPILMVVFTFVCFAWIYAV.

The protein belongs to the ADP/ATP translocase tlc family.

The protein localises to the cell membrane. Functionally, provides the rickettsial cell with host ATP in exchange for rickettsial ADP. This is an obligate exchange system. This energy acquiring activity is an important component of rickettsial parasitism. The polypeptide is ADP,ATP carrier protein 5 (tlcE) (Rickettsia typhi (strain ATCC VR-144 / Wilmington)).